The following is a 128-amino-acid chain: Ig kappa chain V-V region T1 (128 aa).

Residues 1–20 (MRTPAQFLGILLLWFPGIKC) form the signal peptide. The segment at 21-43 (DIKMTQSPSSMYASLGERVTISC) is framework-1. Cysteine 43 and cysteine 108 are joined by a disulfide. A complementarity-determining-1 region spans residues 44–54 (KASQDINSYLT). A framework-2 region spans residues 55–69 (WFQQKPGKSPKTLLY). The interval 70–76 (RANRLVD) is complementarity-determining-2. The interval 77–108 (GVPSRFSGSGSGQDFSLTISSLEYEDMGIYYC) is framework-3. The segment at 109–117 (LQYDEFPLT) is complementarity-determining-3. A framework-4 region spans residues 118 to 127 (FGAGTKLELK).

This is Ig kappa chain V-V region T1 from Mus musculus (Mouse).